The chain runs to 189 residues: Large ribosomal subunit protein bL17 (189 aa).

The disordered stretch occupies residues 136 to 189; the sequence is KAAPAAEEEVVETEEAPAVEAEAAESEEAPAAEAEAAEAEAAETEEAPAAEDKK. A compositionally biased stretch (acidic residues) spans 141-189; it reads AEEEVVETEEAPAVEAEAAESEEAPAAEAEAAEAEAAETEEAPAAEDKK.

Belongs to the bacterial ribosomal protein bL17 family. As to quaternary structure, part of the 50S ribosomal subunit. Contacts protein L32.

In Paenarthrobacter aurescens (strain TC1), this protein is Large ribosomal subunit protein bL17.